The sequence spans 115 residues: NADH-ubiquinone oxidoreductase chain 3 (115 aa).

Transmembrane regions (helical) follow at residues 3–23 (LFIM…LNLL), 55–75 (FFMV…LLPL), and 87–107 (TITW…YEWL).

The protein belongs to the complex I subunit 3 family.

The protein resides in the mitochondrion membrane. The enzyme catalyses a ubiquinone + NADH + 5 H(+)(in) = a ubiquinol + NAD(+) + 4 H(+)(out). Its function is as follows. Core subunit of the mitochondrial membrane respiratory chain NADH dehydrogenase (Complex I) that is believed to belong to the minimal assembly required for catalysis. Complex I functions in the transfer of electrons from NADH to the respiratory chain. The immediate electron acceptor for the enzyme is believed to be ubiquinone. The protein is NADH-ubiquinone oxidoreductase chain 3 (MT-ND3) of Alligator mississippiensis (American alligator).